A 194-amino-acid chain; its full sequence is Lachesicidin (194 aa).

The N-terminal stretch at 1-22 (MQGFFWKTWLVLAVCGTPASLA) is a signal peptide. Positions 23–160 (HRPLSYGEAL…DEEKDQPKRV (138 aa)) are excised as a propeptide. Intrachain disulfides connect Cys79–Cys90 and Cys101–Cys118. Residues 125–154 (EEEEEEEEEEQKAEAENDEEVEKEKEDEEK) show a composition bias toward acidic residues. A disordered region spans residues 125-157 (EEEEEEEEEEQKAEAENDEEVEKEKEDEEKDQP).

This sequence belongs to the cathelicidin family. As to expression, expressed by the venom gland.

It localises to the secreted. The protein localises to the target cell membrane. In terms of biological role, potent antimicrobial peptide against Gram-negative and Gram-positive bacteria. Adopts an amphipathic alpha helical conformation, that may allow to partition into the target membrane. Low hemolytic activities have been observed on mammalian cells. This is Lachesicidin from Lachesis muta rhombeata (Bushmaster).